The sequence spans 227 residues: MGNCVKSPLRNLSRKMRQEEKTSYMAVQTSEDGLADGGELHGPLMMLAQNCAVMHNLLGPACIFLRKGFAENRQPDRSLRPEEIEELREAFREFDKDKDGYINCRDLGNCMRTMGYMPTEMELIELSQQINMNLGGHVDFDDFVELMGPKLLAETADMIGVKELRDAFREFDTNGDGEISTSELREAMRKLLGHQVGHRDIEEIIRDVDLNGDGRVDFEEFVRMMSR.

A lipid anchor (N-myristoyl glycine) is attached at G2. A lipid anchor (S-palmitoyl cysteine) is attached at C4. EF-hand domains follow at residues 82 to 117 (EEIE…MGYM), 136 to 153 (GHVD…KLLA), 159 to 194 (IGVK…LLGH), and 196 to 227 (VGHR…MMSR). Ca(2+) contacts are provided by D95, D97, D99, Y101, and D106. Ca(2+) is bound by residues D172, N174, D176, and E178. At S180 the chain carries Phosphoserine. 6 residues coordinate Ca(2+): E183, D209, N211, D213, R215, and E220.

In terms of assembly, homodimer; when bound to calcium or magnesium. Interacts (via C-terminus) with ITPR1, ITPR2 and ITPR3. This binding is calcium dependent and the interaction correlates with calcium concentration. An additional calcium-independent interaction with the N-terminus of ITPR1 results in a decreased InsP(3) binding to the receptor. Interacts with CACNA1A (via C-terminal CDB motif) in the pre- and postsynaptic membranes. Interacts with CACNA1D and CACNA1C (via C-terminal C and IQ motifs). The binding to the C motif is calcium independent whereas the binding to IQ requires the presence of calcium and is mutually exclusive with calmodulin binding. Interacts with TRPC5 (via C-terminus). Interacts (via EF-hands 1 and 2) at microtubules with MAP1LC3B. Interacts with MYO1C. Interacts (via EF-hands 1 and 2) with NSMF (via the central NLS-containing motif region), the interaction occurs in a calcium dependent manner after synaptic NMDA receptor stimulation and prevents nuclear import of NSMF. Interacts with SPACA9 homolog. In terms of processing, phosphorylated. The phosphorylation regulates the activity. Expressed in the inner retina, specifically in amacrine cells and in cone OFF-bipolar cells (at protein level).

Its function is as follows. Modulates calcium-dependent activity of inositol 1,4,5-triphosphate receptors (ITPRs). Inhibits agonist-induced intracellular calcium signaling. Enhances inactivation and does not support calcium-dependent facilitation of voltage-dependent P/Q-type calcium channels. Causes calcium-dependent facilitation and inhibits inactivation of L-type calcium channels by binding to the same sites as calmodulin in the C-terminal domain of CACNA1C, but has an opposite effect on channel function. Suppresses the calcium-dependent inactivation of CACNA1D. Inhibits TRPC5 channels. Prevents NMDA receptor-induced cellular degeneration. Required for the normal transfer of light signals through the retina. The sequence is that of Calcium-binding protein 1 (Cabp1) from Mus musculus (Mouse).